Reading from the N-terminus, the 72-residue chain is uncharacterized protein (72 aa).

This is an uncharacterized protein from Archaeoglobus fulgidus (strain ATCC 49558 / DSM 4304 / JCM 9628 / NBRC 100126 / VC-16).